The chain runs to 95 residues: Nickel and cobalt resistance protein CnrY (95 aa).

The Cytoplasmic portion of the chain corresponds to 1–45 (MADVEEWLTHARKVTQEASIGVDVTSIQECISAEPAQRVLVARRD). A helical membrane pass occupies residues 46-68 (AWRAICCAAFAALVAFAAINRVA). Topologically, residues 69–95 (TIMLEKPAPTWVATPSAASPFGLLIGK) are periplasmic.

To A.xylosoxydans NccY.

The protein localises to the cell inner membrane. Functionally, nickel and cobalt resistance proteins CnrA, CnrB, CnrC CnrH and CnrR may be involved in the regulation of CNR. In terms of biological role, cnrH alone is able to activate cnr expression, and both CnrY and CrnX are needed for nickel induction of CnrH. In the absence of wild-type CnrY (due either to a frameshift, PubMed:10671463 or absence of the transcript, PubMed:10671464), nickel and cobalt resistance is constitutive, indicating that CrnY may act as a repressor or an anti-sigma factor. The polypeptide is Nickel and cobalt resistance protein CnrY (cnrY) (Cupriavidus metallidurans (strain ATCC 43123 / DSM 2839 / NBRC 102507 / CH34) (Ralstonia metallidurans)).